A 175-amino-acid chain; its full sequence is B9 domain-containing protein 2 (175 aa).

In terms of domain architecture, C2 B9-type spans 2-118 (AEVHVIGQII…ACPTWRPLGS (117 aa)).

Belongs to the B9D family. In terms of assembly, part of the tectonic-like complex (also named B9 complex). Interacts with TUBG1.

The protein resides in the cytoplasm. It is found in the cytoskeleton. It localises to the cilium basal body. The protein localises to the cilium axoneme. Its subcellular location is the nucleus. Component of the tectonic-like complex, a complex localized at the transition zone of primary cilia and acting as a barrier that prevents diffusion of transmembrane proteins between the cilia and plasma membranes. The protein is B9 domain-containing protein 2 (B9D2) of Homo sapiens (Human).